Reading from the N-terminus, the 233-residue chain is NAD-dependent protein deacylase (233 aa).

The 230-residue stretch at 1 to 230 (MKNIMILSGA…ALDIENFMKD (230 aa)) folds into the Deacetylase sirtuin-type domain. 9–28 (GAGLSAPSGLKTFRDNDGLW) contacts NAD(+). 2 residues coordinate substrate: Y53 and R56. 88-91 (QNVD) contacts NAD(+). Residue H106 is the Proton acceptor of the active site. Residues C114, C117, C133, and C136 each coordinate Zn(2+). Residues 172 to 174 (GTS) and I213 each bind NAD(+).

Belongs to the sirtuin family. Class III subfamily. The cofactor is Zn(2+).

It is found in the cytoplasm. It carries out the reaction N(6)-acetyl-L-lysyl-[protein] + NAD(+) + H2O = 2''-O-acetyl-ADP-D-ribose + nicotinamide + L-lysyl-[protein]. The catalysed reaction is N(6)-succinyl-L-lysyl-[protein] + NAD(+) + H2O = 2''-O-succinyl-ADP-D-ribose + nicotinamide + L-lysyl-[protein]. Its function is as follows. NAD-dependent lysine deacetylase and desuccinylase that specifically removes acetyl and succinyl groups on target proteins. Modulates the activities of several proteins which are inactive in their acylated form. This chain is NAD-dependent protein deacylase, found in Campylobacter jejuni (strain RM1221).